We begin with the raw amino-acid sequence, 394 residues long: Protein DDI1 homolog 2 (394 aa).

In terms of domain architecture, Ubiquitin-like spans 1–81; it reads MLITVYCVRR…VILRQRETPE (81 aa). Residues 82 to 128 are disordered; it reads ARPAAPFPGLDFSTIAVPGSSSQPAPSQPQAPPPPPPDTSSFPQGLD. The segment covering 107 to 119 has biased composition (pro residues); the sequence is PSQPQAPPPPPPD. Residue Asp247 is part of the active site. The Ubiquitin-binding signature appears at 371–390; the sequence is EEIADRELAEVLQKSAEEAD.

Belongs to the DDI1 family. Homodimer.

It is found in the cytoplasm. The protein resides in the cytosol. Its subcellular location is the chromosome. Functionally, aspartic protease that mediates the cleavage of NFE2L1/NRF1 at 'Leu-104', thereby promoting release of NFE2L1/NRF1 from the endoplasmic reticulum membrane. Ubiquitination of NFE2L1/NRF1 is a prerequisite for cleavage, suggesting that DDI2 specifically recognizes and binds ubiquitinated NFE2L1/NRF1. Seems to act as a proteasomal shuttle which links the proteasome and replication fork proteins like RTF2. Required for cellular survival following replication stress. The polypeptide is Protein DDI1 homolog 2 (ddi2) (Xenopus tropicalis (Western clawed frog)).